Consider the following 430-residue polypeptide: tRNA(Ile)-lysidine synthase (430 aa).

27-32 (SGGSDS) is an ATP binding site.

It belongs to the tRNA(Ile)-lysidine synthase family.

The protein resides in the cytoplasm. The catalysed reaction is cytidine(34) in tRNA(Ile2) + L-lysine + ATP = lysidine(34) in tRNA(Ile2) + AMP + diphosphate + H(+). Functionally, ligates lysine onto the cytidine present at position 34 of the AUA codon-specific tRNA(Ile) that contains the anticodon CAU, in an ATP-dependent manner. Cytidine is converted to lysidine, thus changing the amino acid specificity of the tRNA from methionine to isoleucine. The protein is tRNA(Ile)-lysidine synthase of Rickettsia akari (strain Hartford).